Here is a 375-residue protein sequence, read N- to C-terminus: MVGFGANRRGGRLPSFLLAALLLVIAVLAFNCWNAASRQAVLREELAELQSQAKRTEVARGRLEKRNSDLLGRVDSHRKQLEQKEADYSQLSSQLQARDGQVKRCEDSRVKLQNNISYQMADIHRLKEQLAELRQEFIRQEDQLHEYKKNNTYLTRRLEYDSLQCGQQIKEMRIQHEENIKKLMDQIVREQKATQRIQSSKDAEVNPNGDNQPISKTVPEMEVKNAENNELPSDRVVNGKEKVKPGGDAGMPEIEDNDPAKAEDTPTAPRSDNHHQADVNLPTEQPHAPNLAPGLHGDSDGNADIAKEIPPNSLQHLNFGENMDSQNENKIEADHLKLQKGRAVGLQKMKQNDEERDLQNDLVDYSKPRFGDGVL.

At 1–12 (MVGFGANRRGGR) the chain is on the cytoplasmic side. The helical; Signal-anchor for type II membrane protein transmembrane segment at 13–33 (LPSFLLAALLLVIAVLAFNCW) threads the bilayer. Residues 34–198 (NAASRQAVLR…REQKATQRIQ (165 aa)) are a coiled coil. Over 34–375 (NAASRQAVLR…SKPRFGDGVL (342 aa)) the chain is Lumenal. Disordered stretches follow at residues 81–102 (LEQKEADYSQLSSQLQARDGQV), 193–327 (ATQR…DSQN), and 342–375 (RAVGLQKMKQNDEERDLQNDLVDYSKPRFGDGVL). Basic and acidic residues-rich tracts occupy residues 193–204 (ATQRIQSSKDAE) and 350–375 (KQNDEERDLQNDLVDYSKPRFGDGVL).

This sequence belongs to the GOLM family.

It localises to the membrane. The sequence is that of Protein GOLM2 (GOLM2) from Gallus gallus (Chicken).